Consider the following 123-residue polypeptide: Small ribosomal subunit protein eS8 (123 aa).

Residues 1 to 37 (MKDQGRSTRKRTGGRLKHASNKKRHQLGREPAETTVG) form a disordered region. Basic residues predominate over residues 7-26 (STRKRTGGRLKHASNKKRHQ).

This sequence belongs to the eukaryotic ribosomal protein eS8 family. As to quaternary structure, part of the 30S ribosomal subunit.

In Halorubrum lacusprofundi (strain ATCC 49239 / DSM 5036 / JCM 8891 / ACAM 34), this protein is Small ribosomal subunit protein eS8.